A 220-amino-acid polypeptide reads, in one-letter code: Deoxyribose-phosphate aldolase (220 aa).

Asp89 serves as the catalytic Proton donor/acceptor. The Schiff-base intermediate with acetaldehyde role is filled by Lys151. Lys180 (proton donor/acceptor) is an active-site residue.

Belongs to the DeoC/FbaB aldolase family. DeoC type 1 subfamily.

It localises to the cytoplasm. It carries out the reaction 2-deoxy-D-ribose 5-phosphate = D-glyceraldehyde 3-phosphate + acetaldehyde. Its pathway is carbohydrate degradation; 2-deoxy-D-ribose 1-phosphate degradation; D-glyceraldehyde 3-phosphate and acetaldehyde from 2-deoxy-alpha-D-ribose 1-phosphate: step 2/2. In terms of biological role, catalyzes a reversible aldol reaction between acetaldehyde and D-glyceraldehyde 3-phosphate to generate 2-deoxy-D-ribose 5-phosphate. The sequence is that of Deoxyribose-phosphate aldolase from Streptococcus pneumoniae (strain Hungary19A-6).